We begin with the raw amino-acid sequence, 364 residues long: Aminomethyltransferase (364 aa).

It belongs to the GcvT family. The glycine cleavage system is composed of four proteins: P, T, L and H.

It carries out the reaction N(6)-[(R)-S(8)-aminomethyldihydrolipoyl]-L-lysyl-[protein] + (6S)-5,6,7,8-tetrahydrofolate = N(6)-[(R)-dihydrolipoyl]-L-lysyl-[protein] + (6R)-5,10-methylene-5,6,7,8-tetrahydrofolate + NH4(+). The glycine cleavage system catalyzes the degradation of glycine. The protein is Aminomethyltransferase of Shewanella oneidensis (strain ATCC 700550 / JCM 31522 / CIP 106686 / LMG 19005 / NCIMB 14063 / MR-1).